A 575-amino-acid polypeptide reads, in one-letter code: Lysine--tRNA ligase (575 aa).

Mg(2+)-binding residues include Glu412 and Glu419.

The protein belongs to the class-II aminoacyl-tRNA synthetase family. In terms of assembly, homodimer. Requires Mg(2+) as cofactor.

It is found in the cytoplasm. The catalysed reaction is tRNA(Lys) + L-lysine + ATP = L-lysyl-tRNA(Lys) + AMP + diphosphate. The protein is Lysine--tRNA ligase of Bacteroides fragilis (strain YCH46).